Consider the following 173-residue polypeptide: Shikimate kinase 1 (173 aa).

14–19 (GAGKST) contacts ATP. S18 serves as a coordination point for Mg(2+). Residues D36, R60, and G82 each contribute to the substrate site. R120 is an ATP binding site. R140 is a substrate binding site. Q157 contacts ATP.

The protein belongs to the shikimate kinase family. Monomer. Mg(2+) is required as a cofactor.

It is found in the cytoplasm. The catalysed reaction is shikimate + ATP = 3-phosphoshikimate + ADP + H(+). Its pathway is metabolic intermediate biosynthesis; chorismate biosynthesis; chorismate from D-erythrose 4-phosphate and phosphoenolpyruvate: step 5/7. Its function is as follows. Catalyzes the specific phosphorylation of the 3-hydroxyl group of shikimic acid using ATP as a cosubstrate. In Serratia proteamaculans (strain 568), this protein is Shikimate kinase 1.